A 440-amino-acid polypeptide reads, in one-letter code: Adenylosuccinate synthetase 1, chloroplastic (440 aa).

GTP contacts are provided by residues 13 to 19 (GDEGKGK) and 41 to 43 (GHT). The active-site Proton acceptor is the D14. Mg(2+) is bound by residues D14 and G41. Residues 14–17 (DEGK), 39–42 (NAGH), T135, R149, Q230, T245, and R313 contribute to the IMP site. Residue H42 is the Proton donor of the active site. 309–315 (TVTRRKR) is a substrate binding site. Residues R315 and 341-343 (KLD) each bind GTP.

Belongs to the adenylosuccinate synthetase family. As to quaternary structure, homodimer. Requires Mg(2+) as cofactor.

The protein resides in the plastid. Its subcellular location is the chloroplast. It catalyses the reaction IMP + L-aspartate + GTP = N(6)-(1,2-dicarboxyethyl)-AMP + GDP + phosphate + 2 H(+). It participates in purine metabolism; AMP biosynthesis via de novo pathway; AMP from IMP: step 1/2. Functionally, plays an important role in the de novo pathway and in the salvage pathway of purine nucleotide biosynthesis. Catalyzes the first committed step in the biosynthesis of AMP from IMP. This chain is Adenylosuccinate synthetase 1, chloroplastic, found in Ricinus communis (Castor bean).